Here is an 81-residue protein sequence, read N- to C-terminus: Small ribosomal subunit protein eS21 (81 aa).

The protein belongs to the eukaryotic ribosomal protein eS21 family.

This is Small ribosomal subunit protein eS21 (RPS21) from Zea mays (Maize).